The primary structure comprises 89 residues: MSLNAEIKAQIVADNARCANDTGSPEVQVALLTAQINHLQGHFKEHSKDHHGRRGLLRMVSQRRKLLDYLKRKDVQRYAALIAKLGLRR.

Belongs to the universal ribosomal protein uS15 family. As to quaternary structure, part of the 30S ribosomal subunit. Forms a bridge to the 50S subunit in the 70S ribosome, contacting the 23S rRNA.

In terms of biological role, one of the primary rRNA binding proteins, it binds directly to 16S rRNA where it helps nucleate assembly of the platform of the 30S subunit by binding and bridging several RNA helices of the 16S rRNA. Its function is as follows. Forms an intersubunit bridge (bridge B4) with the 23S rRNA of the 50S subunit in the ribosome. This Aeromonas hydrophila subsp. hydrophila (strain ATCC 7966 / DSM 30187 / BCRC 13018 / CCUG 14551 / JCM 1027 / KCTC 2358 / NCIMB 9240 / NCTC 8049) protein is Small ribosomal subunit protein uS15.